A 158-amino-acid chain; its full sequence is NAD(P)H-quinone oxidoreductase subunit N (158 aa).

It belongs to the complex I NdhN subunit family. As to quaternary structure, NDH-1 can be composed of about 15 different subunits; different subcomplexes with different compositions have been identified which probably have different functions.

Its subcellular location is the cellular thylakoid membrane. It carries out the reaction a plastoquinone + NADH + (n+1) H(+)(in) = a plastoquinol + NAD(+) + n H(+)(out). The catalysed reaction is a plastoquinone + NADPH + (n+1) H(+)(in) = a plastoquinol + NADP(+) + n H(+)(out). Functionally, NDH-1 shuttles electrons from an unknown electron donor, via FMN and iron-sulfur (Fe-S) centers, to quinones in the respiratory and/or the photosynthetic chain. The immediate electron acceptor for the enzyme in this species is believed to be plastoquinone. Couples the redox reaction to proton translocation, and thus conserves the redox energy in a proton gradient. Cyanobacterial NDH-1 also plays a role in inorganic carbon-concentration. In Prochlorococcus marinus (strain MIT 9312), this protein is NAD(P)H-quinone oxidoreductase subunit N.